A 404-amino-acid chain; its full sequence is Zinc finger CCCH domain-containing protein 3 (404 aa).

C3H1-type zinc fingers lie at residues 47–75, 90–118, 135–163, 261–289, and 307–335; these read RPGE…HPTH, RIGQ…HPKD, RLGE…HPQP, SSDQ…HPGV, and RPGQ…HPML. Polar residues predominate over residues 350 to 374; it reads FASPVTTHQRISPTPNRSDSKSLSN. The interval 350–404 is disordered; the sequence is FASPVTTHQRISPTPNRSDSKSLSNGKPDVKKESSETEKPDNGEVQDLSEDASSP. Basic and acidic residues predominate over residues 377-391; sequence PDVKKESSETEKPDN.

It is found in the nucleus. In terms of biological role, possesses RNA-binding and ribonuclease activities in vitro. In Arabidopsis thaliana (Mouse-ear cress), this protein is Zinc finger CCCH domain-containing protein 3.